We begin with the raw amino-acid sequence, 602 residues long: GTP-binding protein 2 (602 aa).

The tract at residues 18–64 is disordered; sequence GPAMGGNLKARGAGGSSSCGGPKGKKKNGRNRGGKANNPPYLPPEAE. Residues 29–39 show a composition bias toward gly residues; it reads GAGGSSSCGGP. The span at 40 to 50 shows a compositional bias: basic residues; the sequence is KGKKKNGRNRG. Residues 170 to 398 form the tr-type G domain; the sequence is FLDLRVAVLG…LNILPPLTNS (229 aa). GTP is bound by residues 179 to 186, 260 to 264, and 316 to 319; these read GNVDSGKS, DLAGH, and SKVD.

The protein belongs to the TRAFAC class translation factor GTPase superfamily. Classic translation factor GTPase family. GTPBP1 subfamily. In terms of tissue distribution, predominantly expressed in thymus, spleen, and testis. Expressed at lower levels in brain, heart, lung, kidney, and skeletal muscle. In testis, specifically expressed in spermatocytes and round spermatids.

This Mus musculus (Mouse) protein is GTP-binding protein 2.